The sequence spans 488 residues: F-box protein At3g60790 (488 aa).

The segment at 1 to 21 (MTTQSSSSSSSLPSSLSSTPP) is disordered. The 47-residue stretch at 49 to 95 (VDRISMLPDEMLQKILSTLSTKDAVITSTLSKRWVDQWKRIPHLCVD) folds into the F-box domain.

This chain is F-box protein At3g60790, found in Arabidopsis thaliana (Mouse-ear cress).